A 287-amino-acid chain; its full sequence is Uroporphyrinogen-III C-methyltransferase (287 aa).

Positions 1-10 (MAGKTVTNGA) are enriched in polar residues. The disordered stretch occupies residues 1–24 (MAGKTVTNGAAQGKAARSGADGAV). S-adenosyl-L-methionine-binding positions include Pro40, 116 to 118 (GGD), Thr146, and Met199.

Belongs to the precorrin methyltransferase family.

The catalysed reaction is uroporphyrinogen III + 2 S-adenosyl-L-methionine = precorrin-2 + 2 S-adenosyl-L-homocysteine + H(+). It participates in porphyrin-containing compound metabolism; siroheme biosynthesis; precorrin-2 from uroporphyrinogen III: step 1/1. In terms of biological role, catalyzes the methylation of both C-2 and C-7 of uroporphyrinogen III leading to precorrin-1 and precorrin-2; their oxidative esterification gives respectively factor I octamethyl ester and sirohydrochlorin. Inactivation of uroporphyrinogen-III methyltransferase results in the loss of nitrite and nitric oxide reductase activities, but not of nitrous oxide reductase activity. Likely involved in heme D1 biosynthesis. This chain is Uroporphyrinogen-III C-methyltransferase (nirE), found in Paracoccus denitrificans (strain Pd 1222).